Here is a 234-residue protein sequence, read N- to C-terminus: Small ribosomal subunit protein uS2 (234 aa).

It belongs to the universal ribosomal protein uS2 family.

The sequence is that of Small ribosomal subunit protein uS2 from Clostridium kluyveri (strain NBRC 12016).